We begin with the raw amino-acid sequence, 192 residues long: Superoxide dismutase [Fe] (192 aa).

His-27, His-74, Asp-157, and His-161 together coordinate Fe cation.

It belongs to the iron/manganese superoxide dismutase family. As to quaternary structure, homodimer. Requires Fe cation as cofactor.

The catalysed reaction is 2 superoxide + 2 H(+) = H2O2 + O2. In terms of biological role, destroys superoxide anion radicals which are normally produced within the cells and which are toxic to biological systems. This Legionella pneumophila subsp. pneumophila (strain Philadelphia 1 / ATCC 33152 / DSM 7513) protein is Superoxide dismutase [Fe] (sodB).